Consider the following 400-residue polypeptide: Probable tRNA sulfurtransferase (400 aa).

The THUMP domain occupies 60-164 (EPIIEKLKNV…KEATYITSGT (105 aa)). Residues 182 to 183 (LL), 207 to 208 (HF), arginine 264, glycine 286, and glutamine 295 contribute to the ATP site.

Belongs to the ThiI family.

The protein localises to the cytoplasm. The enzyme catalyses [ThiI sulfur-carrier protein]-S-sulfanyl-L-cysteine + a uridine in tRNA + 2 reduced [2Fe-2S]-[ferredoxin] + ATP + H(+) = [ThiI sulfur-carrier protein]-L-cysteine + a 4-thiouridine in tRNA + 2 oxidized [2Fe-2S]-[ferredoxin] + AMP + diphosphate. It carries out the reaction [ThiS sulfur-carrier protein]-C-terminal Gly-Gly-AMP + S-sulfanyl-L-cysteinyl-[cysteine desulfurase] + AH2 = [ThiS sulfur-carrier protein]-C-terminal-Gly-aminoethanethioate + L-cysteinyl-[cysteine desulfurase] + A + AMP + 2 H(+). The protein operates within cofactor biosynthesis; thiamine diphosphate biosynthesis. Its function is as follows. Catalyzes the ATP-dependent transfer of a sulfur to tRNA to produce 4-thiouridine in position 8 of tRNAs, which functions as a near-UV photosensor. Also catalyzes the transfer of sulfur to the sulfur carrier protein ThiS, forming ThiS-thiocarboxylate. This is a step in the synthesis of thiazole, in the thiamine biosynthesis pathway. The sulfur is donated as persulfide by IscS. This Oceanobacillus iheyensis (strain DSM 14371 / CIP 107618 / JCM 11309 / KCTC 3954 / HTE831) protein is Probable tRNA sulfurtransferase.